Reading from the N-terminus, the 339-residue chain is UPF0450 protein C17orf58 (339 aa).

Residues 1-17 (MTARAFWLLCLIVGSSP) form the signal peptide. The segment at 17-191 (PEAPVAERKT…PQRDAEPGAE (175 aa)) is disordered. The span at 21–36 (VAERKTSPPHSRKPDS) shows a compositional bias: basic and acidic residues. The segment covering 56–72 (APQRPRAAEVAPAARAW) has biased composition (low complexity). Basic and acidic residues predominate over residues 112-125 (ASPRREPASEDAPR). Positions 132–163 (LRFPAARPPALATEGSAGHAHPNRPRAAALAP) are enriched in low complexity. 3 disulfides stabilise this stretch: cysteine 193-cysteine 267, cysteine 197-cysteine 271, and cysteine 208-cysteine 338. Residues 193 to 338 (CARACRSDLD…QIQGAIHTQC (146 aa)) enclose the NTR domain.

Belongs to the UPF0450 family.

This Homo sapiens (Human) protein is UPF0450 protein C17orf58 (C17orf58).